The following is a 415-amino-acid chain: Serine--tRNA ligase (415 aa).

Residue 231–233 (TAE) participates in L-serine binding. 262–264 (RSE) contributes to the ATP binding site. Position 285 (E285) interacts with L-serine. 349–352 (EISS) is a binding site for ATP. Residue S383 coordinates L-serine.

This sequence belongs to the class-II aminoacyl-tRNA synthetase family. Type-1 seryl-tRNA synthetase subfamily. As to quaternary structure, homodimer. The tRNA molecule binds across the dimer.

Its subcellular location is the cytoplasm. It catalyses the reaction tRNA(Ser) + L-serine + ATP = L-seryl-tRNA(Ser) + AMP + diphosphate + H(+). It carries out the reaction tRNA(Sec) + L-serine + ATP = L-seryl-tRNA(Sec) + AMP + diphosphate + H(+). It participates in aminoacyl-tRNA biosynthesis; selenocysteinyl-tRNA(Sec) biosynthesis; L-seryl-tRNA(Sec) from L-serine and tRNA(Sec): step 1/1. In terms of biological role, catalyzes the attachment of serine to tRNA(Ser). Is also able to aminoacylate tRNA(Sec) with serine, to form the misacylated tRNA L-seryl-tRNA(Sec), which will be further converted into selenocysteinyl-tRNA(Sec). The polypeptide is Serine--tRNA ligase (Helicobacter pylori (strain J99 / ATCC 700824) (Campylobacter pylori J99)).